The following is a 172-amino-acid chain: Ribosome maturation factor RimM (172 aa).

A PRC barrel domain is found at 93–167 (DEHEFYYHEI…RVVITPIPGM (75 aa)).

It belongs to the RimM family. Binds ribosomal protein uS19.

Its subcellular location is the cytoplasm. Its function is as follows. An accessory protein needed during the final step in the assembly of 30S ribosomal subunit, possibly for assembly of the head region. Essential for efficient processing of 16S rRNA. May be needed both before and after RbfA during the maturation of 16S rRNA. It has affinity for free ribosomal 30S subunits but not for 70S ribosomes. The chain is Ribosome maturation factor RimM from Exiguobacterium sp. (strain ATCC BAA-1283 / AT1b).